A 113-amino-acid polypeptide reads, in one-letter code: Ribulose bisphosphate carboxylase small subunit (113 aa).

It belongs to the RuBisCO small chain family. Heterohexadecamer of 8 large and 8 small subunits. Forms a CsoS2-CsoS1-RuBisCO complex.

It is found in the carboxysome. Its function is as follows. RuBisCO catalyzes two reactions: the carboxylation of D-ribulose 1,5-bisphosphate, the primary event in carbon dioxide fixation, as well as the oxidative fragmentation of the pentose substrate in the photorespiration process. Both reactions occur simultaneously and in competition at the same active site. Although the small subunit is not catalytic it is essential for maximal activity. This Prochlorococcus marinus (strain MIT 9313) protein is Ribulose bisphosphate carboxylase small subunit.